The primary structure comprises 495 residues: Cytochrome P450 94C1 (495 aa).

Residues 2-22 traverse the membrane as a helical segment; it reads LLIISFTIVSFFFIIIFSLFH. A heme-binding site is contributed by Cys-439.

This sequence belongs to the cytochrome P450 family. Requires heme as cofactor.

Its subcellular location is the membrane. It is found in the endoplasmic reticulum membrane. The enzyme catalyses a 12-hydroxyjasmonyl-L-alpha-amino acid + 2 reduced [NADPH--hemoprotein reductase] + 2 O2 = a 12-hydroxy-12-oxojasmonyl-L-alpha-amino acid + 2 oxidized [NADPH--hemoprotein reductase] + 3 H2O + 3 H(+). Involved in the oxidation of the plant hormone jasmonoyl-L-isoleucine (JA-Ile), a bioactive phytohormone of the jasmonate-mediated signaling pathway. Converts 12-hydroxy-JA-Ile (12OH-JA-Ile) to the carboxy-derivative 12COOH-JA-Ile. Exerts negative feedback control on JA-Ile levels and plays a role in attenuation of jasmonate responses. Also functions as in-chain fatty acids hydroxylase in vitro. Catalyzes the hydroxylation of 12-hydroxy-jasmonoyl-L-phenylalanine (12OH-JA-Phe) in vitro. Converts 12OH-JA-Phe to the carboxy-derivative 12COOH-JA-Phe. In Arabidopsis thaliana (Mouse-ear cress), this protein is Cytochrome P450 94C1.